A 290-amino-acid chain; its full sequence is ATP synthase gamma chain (290 aa).

It belongs to the ATPase gamma chain family. F-type ATPases have 2 components, CF(1) - the catalytic core - and CF(0) - the membrane proton channel. CF(1) has five subunits: alpha(3), beta(3), gamma(1), delta(1), epsilon(1). CF(0) has three main subunits: a, b and c.

Its subcellular location is the cell inner membrane. In terms of biological role, produces ATP from ADP in the presence of a proton gradient across the membrane. The gamma chain is believed to be important in regulating ATPase activity and the flow of protons through the CF(0) complex. The protein is ATP synthase gamma chain of Phenylobacterium zucineum (strain HLK1).